A 166-amino-acid chain; its full sequence is Probable DHNTP pyrophosphohydrolase (166 aa).

The 125-residue stretch at D42 to I166 folds into the Nudix hydrolase domain. Residues G73–G94 carry the Nudix box motif. Residues E88 and E92 each coordinate Mg(2+).

The protein belongs to the Nudix hydrolase family. Monomer. Mg(2+) serves as cofactor.

The protein operates within cofactor biosynthesis; tetrahydrofolate biosynthesis; 2-amino-4-hydroxy-6-hydroxymethyl-7,8-dihydropteridine diphosphate from 7,8-dihydroneopterin triphosphate: step 1/4. In terms of biological role, probably mediates the removal of pyrophosphate from dihydroneopterin triphosphate (DHNTP), a possible step in the pterin branch of the folate synthesis pathway. This is Probable DHNTP pyrophosphohydrolase (folQ) from Lactococcus lactis subsp. cremoris (strain MG1363).